The sequence spans 363 residues: S-adenosylmethionine decarboxylase proenzyme (363 aa).

Catalysis depends on residues E9 and E12. The active-site Schiff-base intermediate with substrate; via pyruvic acid is the S69. Position 69 is a pyruvic acid (Ser); by autocatalysis (S69). C83 serves as the catalytic Proton donor; for catalytic activity. Catalysis depends on proton acceptor; for processing activity residues S232 and H245.

It belongs to the eukaryotic AdoMetDC family. It depends on pyruvate as a cofactor. Post-translationally, is synthesized initially as an inactive proenzyme. Formation of the active enzyme involves a self-maturation process in which the active site pyruvoyl group is generated from an internal serine residue via an autocatalytic post-translational modification. Two non-identical subunits are generated from the proenzyme in this reaction, and the pyruvate is formed at the N-terminus of the alpha chain, which is derived from the carboxyl end of the proenzyme. The post-translation cleavage follows an unusual pathway, termed non-hydrolytic serinolysis, in which the side chain hydroxyl group of the serine supplies its oxygen atom to form the C-terminus of the beta chain, while the remainder of the serine residue undergoes an oxidative deamination to produce ammonia and the pyruvoyl group blocking the N-terminus of the alpha chain.

It catalyses the reaction S-adenosyl-L-methionine + H(+) = S-adenosyl 3-(methylsulfanyl)propylamine + CO2. It functions in the pathway amine and polyamine biosynthesis; S-adenosylmethioninamine biosynthesis; S-adenosylmethioninamine from S-adenosyl-L-methionine: step 1/1. The protein is S-adenosylmethionine decarboxylase proenzyme (SAMDC) of Spinacia oleracea (Spinach).